A 229-amino-acid polypeptide reads, in one-letter code: Heptaprenylglyceryl phosphate synthase (229 aa).

Residue Lys12 participates in sn-glycerol 1-phosphate binding. Mg(2+) is bound by residues Asp14 and Thr40. Sn-glycerol 1-phosphate contacts are provided by residues 159-164, Gly189, and 209-210; these read YIEYSG and GN.

This sequence belongs to the GGGP/HepGP synthase family. Group I subfamily. As to quaternary structure, homodimer. It depends on Mg(2+) as a cofactor.

The enzyme catalyses sn-glycerol 1-phosphate + all-trans-heptaprenyl diphosphate = 3-heptaprenyl-sn-glycero-1-phosphate + diphosphate. Its pathway is membrane lipid metabolism; glycerophospholipid metabolism. Its function is as follows. Prenyltransferase that catalyzes in vivo the transfer of the heptaprenyl moiety of heptaprenyl pyrophosphate (HepPP; 35 carbon atoms) to the C3 hydroxyl of sn-glycerol-1-phosphate (G1P), producing heptaprenylglyceryl phosphate (HepGP). This reaction is an ether-bond-formation step in the biosynthesis of archaea-type G1P-based membrane lipids found in Bacillales. This chain is Heptaprenylglyceryl phosphate synthase, found in Staphylococcus saprophyticus subsp. saprophyticus (strain ATCC 15305 / DSM 20229 / NCIMB 8711 / NCTC 7292 / S-41).